The following is a 141-amino-acid chain: MAKKVTGMIKLQLAAGKASPAPPVGPALGQHGVNIMAFCKEFNEKTAKQAGLIIPVVITVYQDRSFSFILKTPPAAVLIKKAVGIESGSGVPNKTKVAKITKEQLKEIAEMKMPDLNAGSVEAAMRMVAGTARSMGVTVEE.

The protein belongs to the universal ribosomal protein uL11 family. Part of the ribosomal stalk of the 50S ribosomal subunit. Interacts with L10 and the large rRNA to form the base of the stalk. L10 forms an elongated spine to which L12 dimers bind in a sequential fashion forming a multimeric L10(L12)X complex. In terms of processing, one or more lysine residues are methylated.

In terms of biological role, forms part of the ribosomal stalk which helps the ribosome interact with GTP-bound translation factors. This is Large ribosomal subunit protein uL11 from Clostridium tetani (strain Massachusetts / E88).